A 430-amino-acid polypeptide reads, in one-letter code: Agropine synthesis reductase (430 aa).

Leu203–Ser227 is a binding site for NAD(+). Residue Ser333 participates in substrate binding. Tyr346 acts as the Proton acceptor in catalysis.

This sequence belongs to the short-chain dehydrogenases/reductases (SDR) family.

Its pathway is opine metabolism; mannopine biosynthesis. In terms of biological role, reduces deoxy-fructosyl-glutamine to mannopine. The polypeptide is Agropine synthesis reductase (mas1) (Rhizobium rhizogenes (Agrobacterium rhizogenes)).